The primary structure comprises 188 residues: Elongation factor P (188 aa).

K34 carries the N6-(3,6-diaminohexanoyl)-5-hydroxylysine modification.

It belongs to the elongation factor P family. Post-translationally, may be beta-lysylated on the epsilon-amino group of Lys-34 by the combined action of EpmA and EpmB, and then hydroxylated on the C5 position of the same residue by EpmC (if this protein is present). Lysylation is critical for the stimulatory effect of EF-P on peptide-bond formation. The lysylation moiety may extend toward the peptidyltransferase center and stabilize the terminal 3-CCA end of the tRNA. Hydroxylation of the C5 position on Lys-34 may allow additional potential stabilizing hydrogen-bond interactions with the P-tRNA.

Its subcellular location is the cytoplasm. It participates in protein biosynthesis; polypeptide chain elongation. In terms of biological role, involved in peptide bond synthesis. Alleviates ribosome stalling that occurs when 3 or more consecutive Pro residues or the sequence PPG is present in a protein, possibly by augmenting the peptidyl transferase activity of the ribosome. Modification of Lys-34 is required for alleviation. In Haemophilus influenzae (strain PittGG), this protein is Elongation factor P.